We begin with the raw amino-acid sequence, 163 residues long: Neurotrophin-3 (163 aa).

A signal peptide spans 1–3 (IQS). Residues 4–119 (TSMDQGILTE…VLNRTSRRKR (116 aa)) constitute a propeptide that is removed on maturation. N-linked (GlcNAc...) asparagine glycosylation is present at Asn112.

This sequence belongs to the NGF-beta family.

It is found in the secreted. Its function is as follows. Seems to promote the survival of visceral and proprioceptive sensory neurons. The chain is Neurotrophin-3 (NTF3) from Chilabothrus striatus (Haitian boa constrictor).